The chain runs to 473 residues: Tubulin gamma chain (473 aa).

Residues 33–56 are disordered; the sequence is TDGLSQLPDSSTERDDDTKPFFRE. A compositionally biased stretch (basic and acidic residues) spans 43 to 56; sequence STERDDDTKPFFRE. 143–149 lines the GTP pocket; sequence AGGTGSG.

The protein belongs to the tubulin family. Interacts with SPC72, SPC97 and SPC98.

The protein resides in the cytoplasm. Its subcellular location is the cytoskeleton. The protein localises to the microtubule organizing center. It localises to the spindle pole body. In terms of biological role, tubulin is the major constituent of microtubules. The gamma chain is found at microtubule organizing centers (MTOC) such as the spindle poles or the centrosome, suggesting that it is involved in the minus-end nucleation of microtubule assembly. TUB4 is an important spindle pole body component that organizes both cytoplasmic and nuclear microtubule arrays. This Saccharomyces cerevisiae (strain ATCC 204508 / S288c) (Baker's yeast) protein is Tubulin gamma chain (TUB4).